Reading from the N-terminus, the 63-residue chain is MPIAQIHILEGRSDEQKETLIREVSEAISRSLDAPLTSVRVIITEMPKVHFGIGGESAKAIGR.

The active-site Proton acceptor; via imino nitrogen is P2.

It belongs to the 4-oxalocrotonate tautomerase family. In terms of assembly, homohexamer.

It catalyses the reaction (2Z,4E)-2-hydroxyhexa-2,4-dienedioate = (3E)-2-oxohex-3-enedioate. The protein operates within aromatic compound metabolism; salicylate degradation. Functionally, catalyzes the ketonization of 2-hydroxymuconate stereoselectively to yield 2-oxo-3-hexenedioate. In Stutzerimonas stutzeri (Pseudomonas stutzeri), this protein is 2-hydroxymuconate tautomerase (nahJ).